Here is a 534-residue protein sequence, read N- to C-terminus: Lariat debranching enzyme A (534 aa).

A divalent metal cation contacts are provided by Cys8, His10, Asp39, and Asn84. Positions 124–154 (SGIFKSHDYRKGHFERPPYSKDTVRSAYHVR) are lariat recognition loop. 3 residues coordinate a divalent metal cation: His174, His226, and His228. 2 disordered regions span residues 386–439 (EEEK…QEDE) and 469–534 (SMAV…DEDE). Residues 388-400 (EKEDFDMTEDNEA) show a composition bias toward acidic residues. Residues 413–424 (STDTSILSTSVN) are compositionally biased toward polar residues. Residues 428–439 (ITLEDDDEQEDE) show a composition bias toward acidic residues. Residues 484 to 499 (ELDRSESSQTEGEGKQ) show a composition bias toward basic and acidic residues.

It belongs to the lariat debranching enzyme family. Fe(2+) serves as cofactor. The cofactor is Zn(2+). Requires Mn(2+) as cofactor.

The protein localises to the nucleus. Active in presence of diverse metals including Fe(2+), Zn(2+), Mn(2+). Also activated by Ca(2+). Binds two metal cations in two adjacent alpha and beta metal-binding pockets. Cleaves the 2'-5' phosphodiester linkage at the branch point of excised lariat intron RNA and converts them into linear molecules that can be subsequently degraded, thereby facilitating ribonucleotide turnover. Linked to its role in pre-mRNA processing mechanism, may also participate in retrovirus replication and have an antiviral cell-intrinsic defense function. In Xenopus laevis (African clawed frog), this protein is Lariat debranching enzyme A (dbr1-a).